Reading from the N-terminus, the 81-residue chain is Cytotoxin 1 (81 aa).

Positions 1-21 (MKTLLLTLVVVTIVCLDLGYT) are cleaved as a signal peptide. Cystine bridges form between Cys-24/Cys-42, Cys-35/Cys-59, Cys-63/Cys-74, and Cys-75/Cys-80.

Belongs to the three-finger toxin family. Short-chain subfamily. Type IA cytotoxin sub-subfamily. Monomer in solution; Homodimer and oligomer in the presence of negatively charged lipids forming a pore with a size ranging between 20 and 30 Angstroms. Expressed by the venom gland.

It is found in the secreted. Its subcellular location is the target cell membrane. Functionally, basic protein that binds to cell membrane and depolarizes cardiomyocytes. It also shows lytic activities on many other cells, including red blood cells. Interaction with sulfatides in the cell membrane induces pore formation and cell internalization and is responsible for cytotoxicity in cardiomyocytes. It targets the mitochondrial membrane and induces mitochondrial swelling and fragmentation. It binds to the integrin alpha-V/beta-3 (ITGAV/ITGB3) with a moderate affinity and inhibits protein kinases C. It also binds with high affinity to heparin. It also causes skeletal muscle necrosis after intramuscular injection into mice. The protein is Cytotoxin 1 of Naja atra (Chinese cobra).